Reading from the N-terminus, the 164-residue chain is 5-formyltetrahydrofolate cyclo-ligase (164 aa).

Residue 3 to 7 participates in ATP binding; that stretch reads KNALR. Substrate is bound by residues glutamate 50 and glutamate 55. 115–123 is an ATP binding site; that stretch reads RLGFGKGYY. Mg(2+) is bound at residue aspartate 124. ATP contacts are provided by arginine 125 and tryptophan 153. A Mg(2+)-binding site is contributed by aspartate 154.

It belongs to the 5-formyltetrahydrofolate cyclo-ligase family. Monomer or homodimer. The cofactor is Mg(2+). Mn(2+) serves as cofactor. Ca(2+) is required as a cofactor. It depends on Zn(2+) as a cofactor. Requires Fe(2+) as cofactor. The cofactor is Co(2+). Cu(2+) serves as cofactor.

It localises to the cytoplasm. It catalyses the reaction (6S)-5-formyl-5,6,7,8-tetrahydrofolate + ATP = (6R)-5,10-methenyltetrahydrofolate + ADP + phosphate. In terms of biological role, involved in folate metabolism. Catalyzes the irreversible conversion of 5-formyltetrahydrofolate (5-FTHF) to yield 5,10-methenyltetrahydrofolate. This chain is 5-formyltetrahydrofolate cyclo-ligase, found in Mycoplasma pneumoniae (strain ATCC 29342 / M129 / Subtype 1) (Mycoplasmoides pneumoniae).